A 400-amino-acid polypeptide reads, in one-letter code: Nicotinate phosphoribosyltransferase (400 aa).

H220 carries the phosphohistidine; by autocatalysis modification.

The protein belongs to the NAPRTase family. In terms of processing, transiently phosphorylated on a His residue during the reaction cycle. Phosphorylation strongly increases the affinity for substrates and increases the rate of nicotinate D-ribonucleotide production. Dephosphorylation regenerates the low-affinity form of the enzyme, leading to product release.

It catalyses the reaction nicotinate + 5-phospho-alpha-D-ribose 1-diphosphate + ATP + H2O = nicotinate beta-D-ribonucleotide + ADP + phosphate + diphosphate. Its pathway is cofactor biosynthesis; NAD(+) biosynthesis; nicotinate D-ribonucleotide from nicotinate: step 1/1. Its function is as follows. Catalyzes the synthesis of beta-nicotinate D-ribonucleotide from nicotinate and 5-phospho-D-ribose 1-phosphate at the expense of ATP. The polypeptide is Nicotinate phosphoribosyltransferase (Salmonella newport (strain SL254)).